The primary structure comprises 267 residues: 4-hydroxy-tetrahydrodipicolinate reductase (267 aa).

NAD(+) is bound by residues glycine 9–methionine 14 and aspartate 35. Arginine 36 contacts NADP(+). NAD(+) is bound by residues glycine 99 to threonine 101 and alanine 123 to tyrosine 126. The active-site Proton donor/acceptor is the histidine 156. Residue histidine 157 participates in (S)-2,3,4,5-tetrahydrodipicolinate binding. The active-site Proton donor is lysine 160. Glycine 166–threonine 167 provides a ligand contact to (S)-2,3,4,5-tetrahydrodipicolinate.

It belongs to the DapB family.

It is found in the cytoplasm. It catalyses the reaction (S)-2,3,4,5-tetrahydrodipicolinate + NAD(+) + H2O = (2S,4S)-4-hydroxy-2,3,4,5-tetrahydrodipicolinate + NADH + H(+). The catalysed reaction is (S)-2,3,4,5-tetrahydrodipicolinate + NADP(+) + H2O = (2S,4S)-4-hydroxy-2,3,4,5-tetrahydrodipicolinate + NADPH + H(+). Its pathway is amino-acid biosynthesis; L-lysine biosynthesis via DAP pathway; (S)-tetrahydrodipicolinate from L-aspartate: step 4/4. Its function is as follows. Catalyzes the conversion of 4-hydroxy-tetrahydrodipicolinate (HTPA) to tetrahydrodipicolinate. The polypeptide is 4-hydroxy-tetrahydrodipicolinate reductase (Alkalilimnicola ehrlichii (strain ATCC BAA-1101 / DSM 17681 / MLHE-1)).